The sequence spans 118 residues: Small ribosomal subunit protein uS13 (118 aa).

The disordered stretch occupies residues 94–118 (SLPLRGQRTKTNARTRKGPRKPIKR).

The protein belongs to the universal ribosomal protein uS13 family. As to quaternary structure, part of the 30S ribosomal subunit. Forms a loose heterodimer with protein S19. Forms two bridges to the 50S subunit in the 70S ribosome.

Functionally, located at the top of the head of the 30S subunit, it contacts several helices of the 16S rRNA. In the 70S ribosome it contacts the 23S rRNA (bridge B1a) and protein L5 of the 50S subunit (bridge B1b), connecting the 2 subunits; these bridges are implicated in subunit movement. Contacts the tRNAs in the A and P-sites. The polypeptide is Small ribosomal subunit protein uS13 (Pseudoalteromonas translucida (strain TAC 125)).